The sequence spans 419 residues: Light-independent protochlorophyllide reductase subunit N (419 aa).

[4Fe-4S] cluster-binding residues include Cys20, Cys45, and Cys102.

It belongs to the BchN/ChlN family. Protochlorophyllide reductase is composed of three subunits; BchL, BchN and BchB. Forms a heterotetramer of two BchB and two BchN subunits. The cofactor is [4Fe-4S] cluster.

The catalysed reaction is chlorophyllide a + oxidized 2[4Fe-4S]-[ferredoxin] + 2 ADP + 2 phosphate = protochlorophyllide a + reduced 2[4Fe-4S]-[ferredoxin] + 2 ATP + 2 H2O. Its pathway is porphyrin-containing compound metabolism; bacteriochlorophyll biosynthesis (light-independent). Functionally, component of the dark-operative protochlorophyllide reductase (DPOR) that uses Mg-ATP and reduced ferredoxin to reduce ring D of protochlorophyllide (Pchlide) to form chlorophyllide a (Chlide). This reaction is light-independent. The NB-protein (BchN-BchB) is the catalytic component of the complex. The polypeptide is Light-independent protochlorophyllide reductase subunit N (Chlorobaculum tepidum (strain ATCC 49652 / DSM 12025 / NBRC 103806 / TLS) (Chlorobium tepidum)).